Reading from the N-terminus, the 210-residue chain is uncharacterized protein (210 aa).

To E.coli YkgK.

This is an uncharacterized protein from Escherichia coli (strain K12).